The primary structure comprises 196 residues: Imidazole glycerol phosphate synthase subunit HisH (196 aa).

The region spanning 2 to 196 is the Glutamine amidotransferase type-1 domain; the sequence is KIIIINTNCS…EQLIKNFLEI (195 aa). Cys-77 functions as the Nucleophile in the catalytic mechanism. Catalysis depends on residues His-178 and Glu-180.

Heterodimer of HisH and HisF.

It localises to the cytoplasm. It catalyses the reaction 5-[(5-phospho-1-deoxy-D-ribulos-1-ylimino)methylamino]-1-(5-phospho-beta-D-ribosyl)imidazole-4-carboxamide + L-glutamine = D-erythro-1-(imidazol-4-yl)glycerol 3-phosphate + 5-amino-1-(5-phospho-beta-D-ribosyl)imidazole-4-carboxamide + L-glutamate + H(+). The enzyme catalyses L-glutamine + H2O = L-glutamate + NH4(+). Its pathway is amino-acid biosynthesis; L-histidine biosynthesis; L-histidine from 5-phospho-alpha-D-ribose 1-diphosphate: step 5/9. In terms of biological role, IGPS catalyzes the conversion of PRFAR and glutamine to IGP, AICAR and glutamate. The HisH subunit catalyzes the hydrolysis of glutamine to glutamate and ammonia as part of the synthesis of IGP and AICAR. The resulting ammonia molecule is channeled to the active site of HisF. The chain is Imidazole glycerol phosphate synthase subunit HisH from Blochmanniella floridana.